The following is a 275-amino-acid chain: Large ribosomal subunit protein uL2 (275 aa).

Residues 219–263 are disordered; that stretch reads EVRGAAMNPRDHPHGGGEGRAPRGMPTPKTKWGKPARGVKTRHNP. The span at 227 to 239 shows a compositional bias: basic and acidic residues; that stretch reads PRDHPHGGGEGRA. The span at 249 to 262 shows a compositional bias: basic residues; sequence KWGKPARGVKTRHN.

Belongs to the universal ribosomal protein uL2 family. As to quaternary structure, part of the 50S ribosomal subunit. Forms a bridge to the 30S subunit in the 70S ribosome.

In terms of biological role, one of the primary rRNA binding proteins. Required for association of the 30S and 50S subunits to form the 70S ribosome, for tRNA binding and peptide bond formation. It has been suggested to have peptidyltransferase activity; this is somewhat controversial. Makes several contacts with the 16S rRNA in the 70S ribosome. The protein is Large ribosomal subunit protein uL2 of Roseiflexus castenholzii (strain DSM 13941 / HLO8).